Reading from the N-terminus, the 610-residue chain is L-galactono-1,4-lactone dehydrogenase, mitochondrial (610 aa).

Residues 1 to 35 constitute a mitochondrion transit peptide; it reads MLRSLLLRRSVGHSLGTLSPSSSTIRSSFSPHRTL. Residues 17-61 are disordered; the sequence is TLSPSSSTIRSSFSPHRTLCTTGQTLTPPPPPPPRPPPPPPATAS. Residues 19–30 show a composition bias toward low complexity; it reads SPSSSTIRSSFS. Positions 36–101 are cleaved as a propeptide — removed in mature form; the sequence is CTTGQTLTPP…AKHKKAQIFR (66 aa). Pro residues predominate over residues 43–58; sequence TPPPPPPPRPPPPPPA. A helical membrane pass occupies residues 68-84; that stretch reads YAGYAALAIFSGVATYF. Positions 123–258 constitute an FAD-binding PCMH-type domain; that stretch reads TRNFNQPENL…TPAKGTIELS (136 aa).

FAD serves as cofactor.

It is found in the mitochondrion membrane. It carries out the reaction L-galactono-1,4-lactone + 4 Fe(III)-[cytochrome c] = L-dehydroascorbate + 4 Fe(II)-[cytochrome c] + 5 H(+). The enzyme catalyses L-gulono-1,4-lactone + 2 Fe(III)-[cytochrome c] = L-ascorbate + 2 Fe(II)-[cytochrome c] + 3 H(+). It participates in cofactor biosynthesis; L-ascorbate biosynthesis. Functionally, involved in the biosynthesis of ascorbate. Catalyzes the final step of ascorbate biosynthesis. Uses L-galactono-1,4-lactone and L-gulono-1,4-lactone as substrates, but not D-galactono-1,4-lactone, D-gulono-1,4-lactone, L-mannono-1,4-lactone or D-galactonic acid. Also active with phenazine methosulfate and 1,4-benzoquinone as electron acceptors. Involved in the regulation of the accumulation of the mitochondrial respiratory complex I. Structural part of one of the plant-specific mitochondrial complex I assembly intermediates, lacking the whole distal (PD) module. Prevents the binding of the plant specific P1 protein (CPN60/HSP60), responsible for the linkage of the proximal (PP) to the distal (PD) module. This chain is L-galactono-1,4-lactone dehydrogenase, mitochondrial, found in Arabidopsis thaliana (Mouse-ear cress).